The sequence spans 141 residues: Nucleoside diphosphate kinase (141 aa).

Positions 11, 59, 87, 93, 104, and 114 each coordinate ATP. The active-site Pros-phosphohistidine intermediate is the H117.

This sequence belongs to the NDK family. Homotetramer. Mg(2+) serves as cofactor.

The protein localises to the cytoplasm. It carries out the reaction a 2'-deoxyribonucleoside 5'-diphosphate + ATP = a 2'-deoxyribonucleoside 5'-triphosphate + ADP. The enzyme catalyses a ribonucleoside 5'-diphosphate + ATP = a ribonucleoside 5'-triphosphate + ADP. Functionally, major role in the synthesis of nucleoside triphosphates other than ATP. The ATP gamma phosphate is transferred to the NDP beta phosphate via a ping-pong mechanism, using a phosphorylated active-site intermediate. This Janthinobacterium sp. (strain Marseille) (Minibacterium massiliensis) protein is Nucleoside diphosphate kinase.